The following is a 396-amino-acid chain: Elongation factor Tu (396 aa).

Positions 10–205 (KPHVNIGTIG…AVDESIPDPV (196 aa)) constitute a tr-type G domain. The interval 19–26 (GHVDHGKT) is G1. 19–26 (GHVDHGKT) contributes to the GTP binding site. T26 lines the Mg(2+) pocket. The G2 stretch occupies residues 62 to 66 (GITIN). Residues 83-86 (DAPG) are G3. Residues 83 to 87 (DAPGH) and 138 to 141 (NKSD) contribute to the GTP site. The segment at 138 to 141 (NKSD) is G4. The segment at 175-177 (SAL) is G5.

The protein belongs to the TRAFAC class translation factor GTPase superfamily. Classic translation factor GTPase family. EF-Tu/EF-1A subfamily. Monomer.

It is found in the cytoplasm. The enzyme catalyses GTP + H2O = GDP + phosphate + H(+). GTP hydrolase that promotes the GTP-dependent binding of aminoacyl-tRNA to the A-site of ribosomes during protein biosynthesis. This chain is Elongation factor Tu, found in Mycobacterium marinum (strain ATCC BAA-535 / M).